The sequence spans 332 residues: Glycerol-3-phosphate dehydrogenase [NAD(P)+] (332 aa).

The NADPH site is built by Trp-11, Arg-30, and Lys-108. Sn-glycerol 3-phosphate is bound by residues Lys-108, Gly-137, and Ser-139. Ala-141 is an NADPH binding site. The sn-glycerol 3-phosphate site is built by Lys-192, Asp-245, Ser-255, Arg-256, and Asn-257. The Proton acceptor role is filled by Lys-192. Arg-256 provides a ligand contact to NADPH. Val-280 and Glu-282 together coordinate NADPH.

The protein belongs to the NAD-dependent glycerol-3-phosphate dehydrogenase family.

The protein localises to the cytoplasm. It catalyses the reaction sn-glycerol 3-phosphate + NAD(+) = dihydroxyacetone phosphate + NADH + H(+). The enzyme catalyses sn-glycerol 3-phosphate + NADP(+) = dihydroxyacetone phosphate + NADPH + H(+). Its pathway is membrane lipid metabolism; glycerophospholipid metabolism. Its function is as follows. Catalyzes the reduction of the glycolytic intermediate dihydroxyacetone phosphate (DHAP) to sn-glycerol 3-phosphate (G3P), the key precursor for phospholipid synthesis. This is Glycerol-3-phosphate dehydrogenase [NAD(P)+] from Burkholderia orbicola (strain AU 1054).